The chain runs to 897 residues: MMQQQKPGKPKKINRIDKIKRLQINRSRRPDINQTVPSPLFYVRIVVTWLGMVSLDAMTGFRFELLWPTWLMIRAAAESIQMRNQHCVTTIANPTAARFSVLFICVTATSDLICYLFIPIRMLIFLATTYVWISLYYHTQGGFLRSLATVYGGERLQSWPIVFITCFIVIFELFLRIRSHPILISFFPNVAEYAGVSPVWPRSLNAFFGAHSIGYPVILITVSMHYYFNEWKLRRKQCDVSNRNEQLFRILVEGLPAEYEGPKDYTSQQCLEDDLYYLDPPVQTLQPMQAIQAASATPPTSSKKNGIHKRNGDVTSSTTTSSRKKKHNGNSGFNSTPPNDKKKGKSIRDVDMDDGDDSDDDYSYRDTSSSTIEDQRRGGGISIIRFIFSSAAWLFSFVFESSTPSENSLSNQQIDDDEDYEDGDGDKKNGRTDSMTSTTKGRANTMPSTTRSQNNNNSQKQQKQSNGKSHHQHSSHQNNHQKSNGNSNGHARGFAAVRDSSHDTNASNETDIRSMSRELESLRSEISSRRSQEEDFKLQVSMHESNETRLSQQLSNMRLKVEQMEIKCSSIERHRESDKHQLEQAERKYADLLGKKAEIEATLSAERKARMEVTSKKYDVAEHQRERERQLESEIDKLRIELKSKDESNMRMESELHGLRNYKEENDIDSLNMELRFVRDKSHQMEESLAGENKLKQSLFKCLGDARDTIKSLERRVQEFQIKNGSSIGGGSSETLMNGRSSTEANNENDTTASDQSSPHQHSAMGSPVPFAKMPLSVNVSNRHGSPFNGKVSPIASIGSVLAAAGGPAPPDYMMAVGANVTATTGPVPQKQPRAGFHGISRYNEFTNIASGGEHRLFDTPASAISASAINGSNPEDDFLMNKGKFGAPSQPAARLA.

4 consecutive transmembrane segments (helical) span residues 113 to 133, 157 to 177, 181 to 201, and 204 to 224; these read ICYL…YVWI, QSWP…FLRI, PILI…PVWP, and LNAF…TVSM. Composition is skewed to polar residues over residues 291 to 304 and 329 to 338; these read IQAA…SSKK and GNSGFNSTPP. Residues 291-375 are disordered; the sequence is IQAASATPPT…DTSSSTIEDQ (85 aa). Positions 351-361 are enriched in acidic residues; the sequence is DMDDGDDSDDD. The helical transmembrane segment at 379 to 399 threads the bilayer; that stretch reads GGISIIRFIFSSAAWLFSFVF. A compositionally biased stretch (polar residues) spans 403 to 413; that stretch reads TPSENSLSNQQ. Disordered regions lie at residues 403–535 and 724–770; these read TPSE…QEED and NGSS…SPVP. Over residues 414-424 the composition is skewed to acidic residues; it reads IDDDEDYEDGD. Polar residues predominate over residues 432–451; that stretch reads TDSMTSTTKGRANTMPSTTR. 2 stretches are compositionally biased toward low complexity: residues 452 to 467 and 475 to 490; these read SQNN…QSNG and SHQN…SNGH. A coiled-coil region spans residues 503–726; it reads DTNASNETDI…VQEFQIKNGS (224 aa). Over residues 510 to 535 the composition is skewed to basic and acidic residues; that stretch reads TDIRSMSRELESLRSEISSRRSQEED. A compositionally biased stretch (polar residues) spans 734 to 761; that stretch reads ETLMNGRSSTEANNENDTTASDQSSPHQ.

In terms of tissue distribution, strong expression in many neurons, very weak expression is also detected in others tissues.

Its subcellular location is the rough endoplasmic reticulum membrane. It is found in the nucleus membrane. Plays a role in the regulation of neuronal activity. In AWA and AWC neurons, plays a role in regulating olfactory adaptation by controlling the forgetting sensory responses to odorants such as diacetyl and isoamyl alcohol. May play a role in regulating daf-7 expression in ASI neurons in response to bacterial small RNAs. In ASI neurons, promotes dauer formation in response to pheromones such as the ascarosides ascr#2 and ascr#3. The chain is Macoilin from Caenorhabditis elegans.